The sequence spans 203 residues: Urease accessory protein UreG (203 aa).

14–21 provides a ligand contact to GTP; the sequence is GPVGSGKT.

It belongs to the SIMIBI class G3E GTPase family. UreG subfamily. Homodimer. UreD, UreF and UreG form a complex that acts as a GTP-hydrolysis-dependent molecular chaperone, activating the urease apoprotein by helping to assemble the nickel containing metallocenter of UreC. The UreE protein probably delivers the nickel.

The protein resides in the cytoplasm. Functionally, facilitates the functional incorporation of the urease nickel metallocenter. This process requires GTP hydrolysis, probably effectuated by UreG. The protein is Urease accessory protein UreG of Rhizobium leguminosarum bv. viciae.